Consider the following 396-residue polypeptide: Zinc metalloproteinase nas-24 (396 aa).

The signal sequence occupies residues 1–20; it reads MTRVVHIIGAAFLLSSYAYC. In terms of domain architecture, Peptidase M12A spans 44–230; sequence ERLGSKWLGG…YKINQYYGCG (187 aa). 2 N-linked (GlcNAc...) asparagine glycosylation sites follow: Asn63 and Asn79. Intrachain disulfides connect Cys82-Cys229, Cys105-Cys129, Cys231-Cys251, and Cys253-Cys262. His137 is a Zn(2+) binding site. Residue Glu138 is part of the active site. Residues His141 and His147 each coordinate Zn(2+). Residues 224–263 form the EGF-like domain; that stretch reads NQYYGCGCSTQLECKNGGYTSPSDCSRCNCPKGFFGKLCN. Asn310 carries an N-linked (GlcNAc...) asparagine glycan.

It depends on Zn(2+) as a cofactor.

Its subcellular location is the secreted. In terms of biological role, metalloprotease. This is Zinc metalloproteinase nas-24 (nas-24) from Caenorhabditis elegans.